Here is a 142-residue protein sequence, read N- to C-terminus: Translation initiation factor 2 subunit beta (142 aa).

This sequence belongs to the eIF-2-beta/eIF-5 family. In terms of assembly, heterotrimer composed of an alpha, a beta and a gamma chain.

In terms of biological role, eIF-2 functions in the early steps of protein synthesis by forming a ternary complex with GTP and initiator tRNA. The polypeptide is Translation initiation factor 2 subunit beta (Thermococcus gammatolerans (strain DSM 15229 / JCM 11827 / EJ3)).